The primary structure comprises 366 residues: Transcription factor bHLH74 (366 aa).

Residues 1-11 (MGGESNEGGEM) show a composition bias toward gly residues. Disordered regions lie at residues 1-20 (MGGE…DDES) and 123-201 (GESS…APKE). Basic and acidic residues-rich tracts occupy residues 123-134 (GESSHEDHHQVS) and 159-170 (KAVEEFQEDPQR). One can recognise a bHLH domain in the interval 212-262 (QATNSHSLAERVRREKISERMRLLQELVPGCNKITGKAVMLDEIINYVQSL).

In terms of assembly, homodimer. Interacts with IBH1. Binds reversibly to CRY2 after blue light illumination. As to expression, expressed constitutively in roots, leaves, stems, and flowers.

Its subcellular location is the nucleus. In terms of biological role, transcriptional activator involved in cell elongation. Regulates the expression of a subset of genes involved in cell expansion by binding to the G-box motif. Binds to chromatin DNA of the FT gene and promotes its expression, and thus triggers flowering in response to blue light. The polypeptide is Transcription factor bHLH74 (BHLH74) (Arabidopsis thaliana (Mouse-ear cress)).